The primary structure comprises 274 residues: Large ribosomal subunit protein uL2 (274 aa).

Disordered stretches follow at residues Ala-28–Ile-54 and Val-223–Asp-265. Residues Lys-39 to Arg-48 show a composition bias toward low complexity.

Belongs to the universal ribosomal protein uL2 family. Part of the 50S ribosomal subunit. Forms a bridge to the 30S subunit in the 70S ribosome.

One of the primary rRNA binding proteins. Required for association of the 30S and 50S subunits to form the 70S ribosome, for tRNA binding and peptide bond formation. It has been suggested to have peptidyltransferase activity; this is somewhat controversial. Makes several contacts with the 16S rRNA in the 70S ribosome. In Alteromonas mediterranea (strain DSM 17117 / CIP 110805 / LMG 28347 / Deep ecotype), this protein is Large ribosomal subunit protein uL2.